A 165-amino-acid chain; its full sequence is Nucleotide-binding protein Rcas_1283 (165 aa).

This sequence belongs to the YajQ family.

Nucleotide-binding protein. This Roseiflexus castenholzii (strain DSM 13941 / HLO8) protein is Nucleotide-binding protein Rcas_1283.